The chain runs to 161 residues: uncharacterized protein (161 aa).

Belongs to the sapovirus VP3 family.

This is an uncharacterized protein from Sapporo virus (strain Human/United Kingdom/Manchester/1993) (Hu/SV/Man/1993/UK).